The following is a 494-amino-acid chain: Chromosomal replication initiator protein DnaA (494 aa).

Residues 1–103 (MTNIGGPVVE…LRVEVIVRGM (103 aa)) are domain I, interacts with DnaA modulators. Positions 103 to 148 (MKRVSKGVVCRTSAAPVVLEGQTASSFVESYTEPSVKDIEAGVFGS) are domain II. Residues 149 to 371 (PLDSRYTFES…GAFNQLLFRQ (223 aa)) are domain III, AAA+ region. ATP contacts are provided by G195, G197, K198, and T199. Residues 372-494 (SFESDLSLER…LKRLIGEQAA (123 aa)) are domain IV, binds dsDNA.

This sequence belongs to the DnaA family. As to quaternary structure, oligomerizes as a right-handed, spiral filament on DNA at oriC.

It localises to the cytoplasm. Plays an essential role in the initiation and regulation of chromosomal replication. ATP-DnaA binds to the origin of replication (oriC) to initiate formation of the DNA replication initiation complex once per cell cycle. Binds the DnaA box (a 9 base pair repeat at the origin) and separates the double-stranded (ds)DNA. Forms a right-handed helical filament on oriC DNA; dsDNA binds to the exterior of the filament while single-stranded (ss)DNA is stabiized in the filament's interior. The ATP-DnaA-oriC complex binds and stabilizes one strand of the AT-rich DNA unwinding element (DUE), permitting loading of DNA polymerase. After initiation quickly degrades to an ADP-DnaA complex that is not apt for DNA replication. Binds acidic phospholipids. This is Chromosomal replication initiator protein DnaA from Bartonella quintana (strain Toulouse) (Rochalimaea quintana).